The sequence spans 292 residues: Elongation factor Ts (292 aa).

Residues 80 to 83 (TDFV) are involved in Mg(2+) ion dislocation from EF-Tu.

It belongs to the EF-Ts family.

The protein localises to the cytoplasm. Its function is as follows. Associates with the EF-Tu.GDP complex and induces the exchange of GDP to GTP. It remains bound to the aminoacyl-tRNA.EF-Tu.GTP complex up to the GTP hydrolysis stage on the ribosome. This Cupriavidus necator (strain ATCC 17699 / DSM 428 / KCTC 22496 / NCIMB 10442 / H16 / Stanier 337) (Ralstonia eutropha) protein is Elongation factor Ts.